Consider the following 1023-residue polypeptide: RTX-I toxin determinant A from serotypes 5/10 (1023 aa).

A run of 3 helical transmembrane segments spans residues 226–256 (NNLPDLSLAGPGFDAVSGILSVVSASFILSN), 297–326 (STTAATGGLIGSVVALAISPLSFLNVADKF), and 367–406 (INSVLSAASAGVGAAATGSLVGAPVAALVSAITGIISGIL). 6 Hemolysin-type calcium-binding repeats span residues 730 to 747 (FGSRFTDIFHGAKGDDEI), 748 to 765 (YGNDGHDILYGDDGNDVI), 766 to 783 (HGGDGNDHLVGGNGNDRL), 784 to 801 (IGGKGNNFLNGGDGDDEL), 812 to 829 (LGGAGNDILYGSDGTNLF), and 830 to 847 (DGGVGNDKIYGGLGKDIY).

The protein belongs to the RTX prokaryotic toxin (TC 1.C.11) family. Palmitoylated by ApxIC. The toxin only becomes active when modified.

The protein resides in the secreted. Its subcellular location is the host cell membrane. One of the virulence factors of A.pleuropneumoniae, which has a strong hemolytic activity and is cytotoxic for alveolar macrophages and neutrophils. This is RTX-I toxin determinant A from serotypes 5/10 (apxIA) from Actinobacillus pleuropneumoniae (Haemophilus pleuropneumoniae).